Here is a 446-residue protein sequence, read N- to C-terminus: Citrate/sodium symporter (446 aa).

Topologically, residues 1–27 (MTNMSQPPATEKKGVSDLLGFKIFGMP) are cytoplasmic. The chain crosses the membrane as a helical span at residues 28 to 44 (LPLYAFALITLLLSHFY). The Periplasmic segment spans residues 45–50 (NALPTD). Residues 51-71 (IVGGFAIMFIIGAIFGEIGKR) form a helical membrane-spanning segment. Residues 72–80 (LPIFNKYIG) are Cytoplasmic-facing. Residues 81 to 95 (GAPVMIFLVAAYFVY) form a helical membrane-spanning segment. The Periplasmic portion of the chain corresponds to 96–115 (AGIFTQKEIDAISNVMDKSN). Residues 116–130 (FLNLFIAVLITGAIL) form a helical membrane-spanning segment. Residues 131–136 (SVNRRL) lie on the Cytoplasmic side of the membrane. A helical transmembrane segment spans residues 137-166 (LLKSLLGYIPTILMGIVGASIFGIAIGLVF). Residues 167 to 181 (GIPVDRIMMLYVLPI) are Periplasmic-facing. Na(+) contacts are provided by I181 and G183. The helical intramembrane region spans 182 to 189 (MGGGNGAG). Citrate contacts are provided by N186 and G187. Topologically, residues 190-212 (AVPLSEIYHSVTGRSREEYYSTA) are periplasmic. A helical membrane pass occupies residues 213–233 (IAILTIANIFAIVFAAVLDII). The Cytoplasmic portion of the chain corresponds to 234 to 264 (GKKHTWLSGEGELVRKASFKVEEDEKTGQIT). Residues 265–287 (HRETAVGLVLSTTCFLLAYVVAK) traverse the membrane as a helical segment. At 288-299 (KILPSIGGVAIH) the chain is on the periplasmic side. Residues 300-315 (YFAWMVLIVAALNASG) form a helical membrane-spanning segment. Over 316-327 (LCSPEIKAGAKR) the chain is Cytoplasmic. A helical membrane pass occupies residues 328 to 351 (LSDFFSKQLLWVLMVGVGVCYTDL). At 352–359 (QEIINAIT) the chain is on the periplasmic side. Residues 360–381 (FANVVIAAIIVIGAVLGAAIGG) traverse the membrane as a helical segment. Residues 382-398 (WLMGFFPIESAITAGLC) lie on the Cytoplasmic side of the membrane. Na(+) contacts are provided by M399 and N401. An intramembrane region (helical) is located at residues 399-406 (MANRGGSG). The citrate site is built by R402, G404, and S405. Residues 407–416 (DLEVLSACNR) lie on the Cytoplasmic side of the membrane. The chain crosses the membrane as a helical span at residues 417-438 (MNLISYAQISSRLGGGIVLVIA). R428 is a binding site for citrate. Over 439-446 (SIVFGMMI) the chain is Periplasmic.

The protein belongs to the 2-hydroxycarboxylate transporter (2-HCT) (TC 2.A.24) family. As to quaternary structure, homodimer.

Its subcellular location is the cell inner membrane. It carries out the reaction citrate(out) + 2 Na(+)(out) = citrate(in) + 2 Na(+)(in). In the absence of Na(+), transport is inhibited by the thiol reagents N-ethylmaleimide (NEM) and the methanethiosulfonate (MTS) derivatives MTSEA, MTSET and MTSES. However, inactivation by NEM, MTSES and MTSET is prevented by the presence of Na(+). In the absence of Na(+), the substrate citrate has no effect on the inactivation by permeable or impermeable thiol reagents. In contrast, when subsaturating concentrations of Na(+) are present, citrate significantly reduces inactivation, suggesting ordered binding of the substrate and co-ion; citrate is bound after Na(+). The membrane impermeable bulky maleimide AmdiS does not inactivate the transporter in right-side-out membrane vesicles. The apparent affinity for Na(+) decreases with increasing proton concentration. Protons cannot replace Na(+) in the translocation step but the decrease in apparent affinity for Na(+) towards lower pH suggests that protons can compete with Na(+) for the cation-binding sites. Its function is as follows. Secondary active transporter that catalyzes the uptake of citrate across the membrane with the concomitant uptake of sodium. There are conflicting data regarding exact substrate stoichiometry: the sodium/citrate stoichiometry was predicted to be 1, but the latest studies suggest that CitS transports citrate in symport with 2 sodium ions. Transports citrate as a divalent citrate anion, H-citrate(2-). Shows narrow substrate specificity and is very specific, transporting only citrate and to a low extent citromalate. Symport of Na(+) is absolutely required in the range pH 5-7 because no uptake can be detected in the absence of Na(+). Lithium can replace Na(+) in the symport reaction but it takes about a 200-fold higher concentration of Li(+) over Na(+) to achieve the same rate of uptake. This is Citrate/sodium symporter from Klebsiella pneumoniae.